Here is a 200-residue protein sequence, read N- to C-terminus: dTTP/UTP pyrophosphatase (200 aa).

D80 serves as the catalytic Proton acceptor.

This sequence belongs to the Maf family. YhdE subfamily. The cofactor is a divalent metal cation.

The protein localises to the cytoplasm. It carries out the reaction dTTP + H2O = dTMP + diphosphate + H(+). The enzyme catalyses UTP + H2O = UMP + diphosphate + H(+). Nucleoside triphosphate pyrophosphatase that hydrolyzes dTTP and UTP. May have a dual role in cell division arrest and in preventing the incorporation of modified nucleotides into cellular nucleic acids. The protein is dTTP/UTP pyrophosphatase of Pasteurella multocida (strain Pm70).